Here is a 213-residue protein sequence, read N- to C-terminus: Kynurenine formamidase (213 aa).

A substrate-binding site is contributed by Trp15. Positions 45, 49, and 51 each coordinate Zn(2+). His55 acts as the Proton donor/acceptor in catalysis. Residues His157 and Glu169 each contribute to the Zn(2+) site.

The protein belongs to the Cyclase 1 superfamily. KynB family. In terms of assembly, homodimer. Zn(2+) is required as a cofactor.

It catalyses the reaction N-formyl-L-kynurenine + H2O = L-kynurenine + formate + H(+). Its pathway is amino-acid degradation; L-tryptophan degradation via kynurenine pathway; L-kynurenine from L-tryptophan: step 2/2. Its function is as follows. Catalyzes the hydrolysis of N-formyl-L-kynurenine to L-kynurenine, the second step in the kynurenine pathway of tryptophan degradation. This chain is Kynurenine formamidase, found in Deinococcus geothermalis (strain DSM 11300 / CIP 105573 / AG-3a).